The chain runs to 340 residues: Speriolin-like protein (340 aa).

Disordered regions lie at residues 42-73 (GGGH…RFTS) and 94-135 (APLS…KLSP). Ser-60 is subject to Phosphoserine. The span at 123-133 (PHSHRGTDRKL) shows a compositional bias: basic and acidic residues. At Ser-134 the chain carries Phosphoserine.

This sequence belongs to the speriolin family.

It localises to the cytoplasm. The polypeptide is Speriolin-like protein (SPATC1L) (Homo sapiens (Human)).